Reading from the N-terminus, the 374-residue chain is Chaperone protein DnaJ (374 aa).

The J domain occupies 6–71 (DYYAVLEVTR…QKRAAYDRFG (66 aa)). The CR-type zinc-finger motif lies at 130–209 (GVKKPITVPT…CHGAGTVERE (80 aa)). Zn(2+) is bound by residues Cys-143, Cys-146, Cys-161, Cys-164, Cys-183, Cys-186, Cys-197, and Cys-200. CXXCXGXG motif repeat units follow at residues 143 to 150 (CESCEGTG), 161 to 168 (CPTCHGAG), 183 to 190 (CPTCHGAG), and 197 to 204 (CAACHGAG).

Belongs to the DnaJ family. Homodimer. Zn(2+) is required as a cofactor.

The protein resides in the cytoplasm. Its function is as follows. Participates actively in the response to hyperosmotic and heat shock by preventing the aggregation of stress-denatured proteins and by disaggregating proteins, also in an autonomous, DnaK-independent fashion. Unfolded proteins bind initially to DnaJ; upon interaction with the DnaJ-bound protein, DnaK hydrolyzes its bound ATP, resulting in the formation of a stable complex. GrpE releases ADP from DnaK; ATP binding to DnaK triggers the release of the substrate protein, thus completing the reaction cycle. Several rounds of ATP-dependent interactions between DnaJ, DnaK and GrpE are required for fully efficient folding. Also involved, together with DnaK and GrpE, in the DNA replication of plasmids through activation of initiation proteins. This Gluconacetobacter diazotrophicus (strain ATCC 49037 / DSM 5601 / CCUG 37298 / CIP 103539 / LMG 7603 / PAl5) protein is Chaperone protein DnaJ.